Reading from the N-terminus, the 130-residue chain is MAKPTKKTGSKKTKRNVPNGVAHIQSTFNNTIVSITDTAGEVIAWSSAGASGFKGARKGTPFAAQTAAEAAARRALEQGMRQIEVLVRGPGSGRETAIRALQVAGLEITLIRDVTPLPHNGCRRPKRRRV.

It belongs to the universal ribosomal protein uS11 family. In terms of assembly, part of the 30S ribosomal subunit. Interacts with proteins S7 and S18. Binds to IF-3.

Located on the platform of the 30S subunit, it bridges several disparate RNA helices of the 16S rRNA. Forms part of the Shine-Dalgarno cleft in the 70S ribosome. The polypeptide is Small ribosomal subunit protein uS11 (Prochlorococcus marinus (strain MIT 9303)).